The following is a 207-amino-acid chain: MQIIEKYFKHLSPEQVKQFGALHSLYTEWNEKINVVSRKDIDQLYERHVLHSLGIAKVMAFKPGTRILDVGTGGGFPGIPLSILFPESDFHLIDSIGKKIKVVEEVSAGAGIKNIRTTHGRAEDVTDRYHFVVSRAVTRFKPFWGWVAKKFSDEQFNDLNNGILYLKGGDLDEEIQELNRPAYEYDLNMFFEEEFFDTKKVVHVPAF.

Residues Gly-71, Phe-76, 122–123 (AE), and Arg-135 each bind S-adenosyl-L-methionine.

Belongs to the methyltransferase superfamily. RNA methyltransferase RsmG family.

The protein resides in the cytoplasm. In terms of biological role, specifically methylates the N7 position of a guanine in 16S rRNA. The sequence is that of Ribosomal RNA small subunit methyltransferase G from Cytophaga hutchinsonii (strain ATCC 33406 / DSM 1761 / CIP 103989 / NBRC 15051 / NCIMB 9469 / D465).